The chain runs to 335 residues: Dihydroorotate dehydrogenase (quinone) (335 aa).

FMN is bound by residues 59–63 and Thr83; that span reads AGLDK. Residue Lys63 participates in substrate binding. Substrate is bound at residue 108–112; sequence NRMGF. 2 residues coordinate FMN: Asn136 and Asn169. Asn169 lines the substrate pocket. Catalysis depends on Ser172, which acts as the Nucleophile. Asn174 lines the substrate pocket. The FMN site is built by Lys214 and Thr242. 243-244 contributes to the substrate binding site; the sequence is NT. FMN contacts are provided by residues Gly265, Gly294, and 315-316; that span reads YS.

This sequence belongs to the dihydroorotate dehydrogenase family. Type 2 subfamily. Monomer. The cofactor is FMN.

The protein resides in the cell membrane. The catalysed reaction is (S)-dihydroorotate + a quinone = orotate + a quinol. It participates in pyrimidine metabolism; UMP biosynthesis via de novo pathway; orotate from (S)-dihydroorotate (quinone route): step 1/1. In terms of biological role, catalyzes the conversion of dihydroorotate to orotate with quinone as electron acceptor. The sequence is that of Dihydroorotate dehydrogenase (quinone) from Neisseria gonorrhoeae (strain ATCC 700825 / FA 1090).